The chain runs to 533 residues: Receptor homology region, transmembrane domain- and RING domain-containing protein 1 (533 aa).

The first 26 residues, 1–26 (MNRRRTMLLLICLCATFCLMTQLGAA), serve as a signal peptide directing secretion. The Lumenal segment spans residues 27 to 167 (NVVLMGTNLT…LPAFENSAWS (141 aa)). A glycan (N-linked (GlcNAc...) asparagine) is linked at Asn-34. Cys-68 and Cys-91 are joined by a disulfide. Residues 84–145 (ALIIRGGCTF…ISKASGEVLK (62 aa)) enclose the PA domain. The chain crosses the membrane as a helical span at residues 168–188 (IMAISFISLLAMSAVLATCFF). Topologically, residues 189-533 (VRRHHIRRDR…MASAQSLPGC (345 aa)) are cytoplasmic. The RING-type; atypical zinc-finger motif lies at 236–278 (CAICLEDYNVGEKLRVLPCRHKFHAACVDLWLTTWRTFCPVCK). 2 disordered regions span residues 309-329 (SFRS…PSSQ) and 440-476 (LRRC…LAGA). A compositionally biased stretch (polar residues) spans 448–463 (PSLSTMAPQSPQQSQL).

The protein resides in the prevacuolar compartment membrane. It localises to the protein storage vacuole membrane. Its subcellular location is the golgi apparatus membrane. Involved in the trafficking of vacuolar proteins. Functions probably as a sorting receptor for protein trafficking to the protein storage vacuole (PSV) by binding the C-terminal vacuolar sorting determinant (VSD) of vacuolar-sorted proteins. In Oryza sativa subsp. japonica (Rice), this protein is Receptor homology region, transmembrane domain- and RING domain-containing protein 1.